The following is a 490-amino-acid chain: MDGGGETTATATMEGRGLKKGPWTTTEDAILTEYVRKHGEGNWNAVQKNSGLLRCGKSCRLRWANHLRPNLKKGSFTPDEEKIIIDLHAKLGNKWARMASQLPGRTDNEIKNYWNTRMKRRQRAGLPLYPHEIQHQGIDIDDEFEFDLTSFQFQNQDLDHNHQNMIQYTNSSNTSSSSSSFSSSSSQPSKRLRPDPLVSTNPGLNPIPDSSMDFQMFSLYNNSLENDNNQFGFSVPLSSSSSSNEVCNPNHILEYISENSDTRNTNKKDIDAMSYSSLLMGDLEIRSSSFPLGLDNSVLELPSNQRPTHSFSSSPIIDNGVHLEPPSGNSGLLDALLEESQALSRGGLFKDVRVSSSDLCEVQDKRVKMDFENLLIDHLNSSNHSSLGANPNIHNKYNEPTMVKVTVDDDDELLTSLLNNFPSTTTPLPDWYRVTEMQNEASYLAPPSGILMGNHQGNGRVEPPTVPPSSSVDPMASLGSCYWSNMPSIC.

The segment at 1-21 (MDGGGETTATATMEGRGLKKG) is disordered. 2 consecutive HTH myb-type domains span residues 15–67 (GRGL…ANHL) and 68–122 (RPNL…KRRQ). 2 consecutive DNA-binding regions (H-T-H motif) follow at residues 43 to 67 (WNAVQKNSGLLRCGKSCRLRWANHL) and 95 to 118 (WARMASQLPGRTDNEIKNYWNTRM). Residues 168–206 (YTNSSNTSSSSSSFSSSSSQPSKRLRPDPLVSTNPGLNP) form a disordered region. Low complexity predominate over residues 169-186 (TNSSNTSSSSSSFSSSSS).

As to expression, present mostly in flowers, siliques and floral shoot tips. Expression is restricted to the subapical pith cells of both vegetative and flowering plants and to the hypocotyl hook. Expressed in pollen grains and pollen tube. Mostly expressed in mature pollen grains, and, to a lower extent, in inflorescences and siliques.

The protein resides in the nucleus. In terms of biological role, transcription activator. Binds to 5'-CAACTGTC-3' and/or 5'-TAACAAA-3' motif in target gene promoter (e.g. alpha-amylase) to promote their expression. Positive regulator of abscisic acid (ABA) responses leading to growth arrest during seed germination. Promotes the expression of aleurone-related genes (e.g. CP1, CP, GASA1, BXL1 and BXL2) in seeds. Together with MYB33 and MYB65, promotes the programmed cell death (PCD) leading to vacuolation of protein storage vacuoles (PSVs) in the aleurone layers during seed germination. Maybe involved in the regulation of leaves lamina morphogenesis. Involved in pollen grain development. Together with MYB97 and MYB120, functions as a male factor that controls pollen tube-synergid interaction in fertilization. Required for pollen tube growth arrest and sperm cell release in the female gametophyte, probably via the regulation of pollen tube-specific gene expression. The sequence is that of Transcription factor MYB101 from Arabidopsis thaliana (Mouse-ear cress).